We begin with the raw amino-acid sequence, 212 residues long: Large ribosomal subunit protein uL3 (212 aa).

The residue at position 152 (glutamine 152) is an N5-methylglutamine.

The protein belongs to the universal ribosomal protein uL3 family. As to quaternary structure, part of the 50S ribosomal subunit. Forms a cluster with proteins L14 and L19. Post-translationally, methylated by PrmB.

In terms of biological role, one of the primary rRNA binding proteins, it binds directly near the 3'-end of the 23S rRNA, where it nucleates assembly of the 50S subunit. In Marinomonas sp. (strain MWYL1), this protein is Large ribosomal subunit protein uL3.